The chain runs to 288 residues: ATP phosphoribosyltransferase (288 aa).

The protein belongs to the ATP phosphoribosyltransferase family. Long subfamily. The cofactor is Mg(2+).

The protein localises to the cytoplasm. It catalyses the reaction 1-(5-phospho-beta-D-ribosyl)-ATP + diphosphate = 5-phospho-alpha-D-ribose 1-diphosphate + ATP. Its pathway is amino-acid biosynthesis; L-histidine biosynthesis; L-histidine from 5-phospho-alpha-D-ribose 1-diphosphate: step 1/9. With respect to regulation, feedback inhibited by histidine. Functionally, catalyzes the condensation of ATP and 5-phosphoribose 1-diphosphate to form N'-(5'-phosphoribosyl)-ATP (PR-ATP). Has a crucial role in the pathway because the rate of histidine biosynthesis seems to be controlled primarily by regulation of HisG enzymatic activity. In Methanococcus maripaludis (strain C6 / ATCC BAA-1332), this protein is ATP phosphoribosyltransferase.